Here is a 1470-residue protein sequence, read N- to C-terminus: Isonitrile lipopeptide synthase (1470 aa).

The interval 584 to 603 (PEPESQEAARPTAPAPTAPA) is disordered. Residues 974-1049 (AHDSTLERTI…ELARFLKQQE (76 aa)) form the Carrier domain. Serine 1009 carries the post-translational modification O-(pantetheine 4'-phosphoryl)serine. Residues 1049-1059 (EQQAHAQVQPR) are compositionally biased toward low complexity. The tract at residues 1049-1070 (EQQAHAQVQPRPAGPGLPPTLL) is disordered.

Belongs to the ATP-dependent AMP-binding enzyme family. Requires pantetheine 4'-phosphate as cofactor.

It carries out the reaction 2 a (3R)-3-isocyanyl-fatty acyl-[ACP] + L-lysine + ATP + 2 NADPH = an isonitrile lipopeptide + 2 holo-[ACP] + AMP + diphosphate + 2 NADP(+). The catalysed reaction is 2 (3R)-3-isocyanylbutanoyl-[ACP] + L-lysine + ATP + 2 NADPH = (2S)-2,6-bis[(3R)-3-isocyanobutanamido]hexan-1-ol + 2 holo-[ACP] + AMP + diphosphate + 2 NADP(+). Its function is as follows. Nonribosomal peptide synthetase (NRPS) involved in the biosynthesis of a unique class of isonitrile lipopeptides (INLPs). Catalyzes the final step in the pathway, i.e. the condensation of a (3R)-3-isocyanyl-fatty acyl-[ACP] to both amino groups of a lysine, producing isonitrile lipopeptides. Can use (3R)-3-isocyanylbutanoyl-[ACP] as substrate, leading to (2S)-2,6-bis[(3R)-3-isocyanobutanamido]hexan-1-ol. This is Isonitrile lipopeptide synthase from Streptomyces coeruleorubidus.